The chain runs to 609 residues: Dihydroxy-acid dehydratase (609 aa).

Position 81 (Asp81) interacts with Mg(2+). Cys122 serves as a coordination point for [2Fe-2S] cluster. Mg(2+) contacts are provided by Asp123 and Lys124. An N6-carboxylysine modification is found at Lys124. Cys195 provides a ligand contact to [2Fe-2S] cluster. Glu491 is a Mg(2+) binding site. Ser517 (proton acceptor) is an active-site residue.

The protein belongs to the IlvD/Edd family. As to quaternary structure, homodimer. Requires [2Fe-2S] cluster as cofactor. Mg(2+) is required as a cofactor.

It carries out the reaction (2R)-2,3-dihydroxy-3-methylbutanoate = 3-methyl-2-oxobutanoate + H2O. The enzyme catalyses (2R,3R)-2,3-dihydroxy-3-methylpentanoate = (S)-3-methyl-2-oxopentanoate + H2O. Its pathway is amino-acid biosynthesis; L-isoleucine biosynthesis; L-isoleucine from 2-oxobutanoate: step 3/4. The protein operates within amino-acid biosynthesis; L-valine biosynthesis; L-valine from pyruvate: step 3/4. Functions in the biosynthesis of branched-chain amino acids. Catalyzes the dehydration of (2R,3R)-2,3-dihydroxy-3-methylpentanoate (2,3-dihydroxy-3-methylvalerate) into 2-oxo-3-methylpentanoate (2-oxo-3-methylvalerate) and of (2R)-2,3-dihydroxy-3-methylbutanoate (2,3-dihydroxyisovalerate) into 2-oxo-3-methylbutanoate (2-oxoisovalerate), the penultimate precursor to L-isoleucine and L-valine, respectively. In Acinetobacter baumannii (strain AB307-0294), this protein is Dihydroxy-acid dehydratase.